The chain runs to 517 residues: MATFVDTVTLHLRAGNGGNGCVSVRREKFKPLAGTDGGNGGNGGDIVLVADPQVTTLLAYHRGPHRSSRNGGPGMGDHRHGTLGETLELPVPVGTVVKDADGNELADMATPGMRFIAAEAGQGGLGNASLATTKRKAPGFALLGTQGYEGDVVLELKVVADVALVGYPSAGKSSLVAAISAAKPKIADYPFTTLHPNLGVVEVADSRYTVADVPGLIEGASEGKGLGLEFLRHVERCSALLHVLDCATLDPGRDPVSDLDIILTELAAYPVPDGQVPLLERPQLIALNKIDVPEARELAELVRPELEARGYRVFDISTVSHDGLRQLSFALAELVKDARTKAAEEPEAPRIVLRPRAVDEKPFTIRVDGGSYGDIYRVIGTKPERWVQQTDFRNDEAVGYLADRLAKLGVEDGLFKAGAVAGSSVVIGEGDGVVFDWEPTLTSTAELITSPRGADARVDPISRRTNQARREDYFARMDAKAEARAELVREGEAGLWADEDGTGQDGTDEDATTDAKA.

The region spanning 2 to 159 (ATFVDTVTLH…GDVVLELKVV (158 aa)) is the Obg domain. The OBG-type G domain occupies 160–336 (ADVALVGYPS…LSFALAELVK (177 aa)). Residues 166–173 (GYPSAGKS), 191–195 (FTTLH), 212–215 (DVPG), 288–291 (NKID), and 317–319 (STV) each bind GTP. S173 and T193 together coordinate Mg(2+). The 85-residue stretch at 355-439 (PRAVDEKPFT…GDGVVFDWEP (85 aa)) folds into the OCT domain. Residues 490–517 (EGEAGLWADEDGTGQDGTDEDATTDAKA) are disordered. Over residues 497–517 (ADEDGTGQDGTDEDATTDAKA) the composition is skewed to acidic residues.

This sequence belongs to the TRAFAC class OBG-HflX-like GTPase superfamily. OBG GTPase family. Monomer. It depends on Mg(2+) as a cofactor.

Its subcellular location is the cytoplasm. Its function is as follows. An essential GTPase which binds GTP, GDP and possibly (p)ppGpp with moderate affinity, with high nucleotide exchange rates and a fairly low GTP hydrolysis rate. Plays a role in control of the cell cycle, stress response, ribosome biogenesis and in those bacteria that undergo differentiation, in morphogenesis control. This chain is GTPase Obg, found in Clavibacter sepedonicus (Clavibacter michiganensis subsp. sepedonicus).